The primary structure comprises 531 residues: Zinc finger CCCH-type with G patch domain-containing protein (531 aa).

N-acetylmethionine is present on methionine 1. A disordered region spans residues 91 to 133 (EAPAAARGSGSETVPKAEAGPESAAGGQEEEEGEDEEELSGTK). Low complexity predominate over residues 107-117 (AEAGPESAAGG). A compositionally biased stretch (acidic residues) spans 118 to 129 (QEEEEGEDEEEL). The C3H1-type zinc finger occupies 175-201 (KSLKPCPFFLEGKCRFKENCRFSHGQV). The disordered stretch occupies residues 267–289 (PPLRTEATESDSDSDGTGDSSYA). One can recognise a G-patch domain in the interval 333–379 (TRGIGSRLLTKMGYEFGKGLGRHAEGRVEPIHAVVLPRGKSLDQCVE). Serine 373 bears the Phosphoserine mark. Disordered stretches follow at residues 385–409 (TRVG…GGRP), 426–446 (APGA…DMYH), and 509–531 (RAQE…MTEF). The span at 426–438 (APGALEAGAAPAG) shows a compositional bias: low complexity. Residues 518–531 (EQRKADTHKKMTEF) show a composition bias toward basic and acidic residues.

Interacts with CHD4/Mi-2; the interaction is direct. Post-translationally, ubiquitinated in case of infection by HIV-1, leading to its degradation. Ubiquitination is mediated by the CUL4A-RBX1-DDB1-DCAF1/VPRBP complex that is hijacked by HIV-1 via interaction between HIV-1 Vpr and DCAF1/VPRBP. As to expression, widely expressed.

It localises to the nucleus. Its function is as follows. Transcription repressor that specifically binds the 5'-GGAG[GA]A[GA]A-3' consensus sequence. Represses transcription by recruiting the chromatin multiprotein complex NuRD to target promoters. Negatively regulates expression of EGFR, a gene involved in cell proliferation, survival and migration. Its ability to repress genes of the EGFR pathway suggest it may act as a tumor suppressor. Able to suppress breast carcinogenesis. In terms of biological role, antagonizes the transcription repression by isoform 1 by competing for the binding of the NuRD complex. Does not bind DNA. This Homo sapiens (Human) protein is Zinc finger CCCH-type with G patch domain-containing protein (ZGPAT).